The following is a 266-amino-acid chain: Putative pyruvate, phosphate dikinase regulatory protein (266 aa).

147–154 (GLSRTSKT) provides a ligand contact to ADP.

Belongs to the pyruvate, phosphate/water dikinase regulatory protein family. PDRP subfamily.

The enzyme catalyses N(tele)-phospho-L-histidyl/L-threonyl-[pyruvate, phosphate dikinase] + ADP = N(tele)-phospho-L-histidyl/O-phospho-L-threonyl-[pyruvate, phosphate dikinase] + AMP + H(+). It carries out the reaction N(tele)-phospho-L-histidyl/O-phospho-L-threonyl-[pyruvate, phosphate dikinase] + phosphate + H(+) = N(tele)-phospho-L-histidyl/L-threonyl-[pyruvate, phosphate dikinase] + diphosphate. Functionally, bifunctional serine/threonine kinase and phosphorylase involved in the regulation of the pyruvate, phosphate dikinase (PPDK) by catalyzing its phosphorylation/dephosphorylation. The chain is Putative pyruvate, phosphate dikinase regulatory protein from Clostridium perfringens (strain SM101 / Type A).